Consider the following 921-residue polypeptide: Retinoblastoma-associated protein (921 aa).

The interval 1 to 36 is disordered; sequence MPPKAPRRAAAAEPPPPPPPPPREDDPAQDSGPEEL. Position 2 is a n,N-dimethylproline; by NTM1 (P2). Phosphoserine is present on residues S31 and S243. Phosphothreonine is present on residues T246, T350, T364, and T367. A disordered region spans residues 341–360; sequence PIDSFETERTPRKNNPDEEA. Basic and acidic residues predominate over residues 346-356; it reads ETERTPRKNNP. Positions 367–573 are domain A; it reads TPVRTVMNTI…FDLIKQSKDG (207 aa). Residues 367–764 form a pocket; binds T and E1A region; the sequence is TPVRTVMNTI…QRLKTNILQY (398 aa). At S561 the chain carries Phosphoserine; by CDK2. The tract at residues 574-632 is spacer; the sequence is EGPDNLEPACPLSLPLQGNHTAADMYLSPLRSPKKRTSTTRVNSAANTETQAASAFHTQ. Residues S601, S605, and S617 each carry the phosphoserine modification. The tract at residues 633–764 is domain B; the sequence is KPLKSTSLAL…QRLKTNILQY (132 aa). The segment at 756–921 is interaction with LIMD1; sequence RLKTNILQYA…SKDVSNKEEK (166 aa). The interval 764–921 is domain; mediates interaction with E4F1; it reads YASTRPPTLS…SKDVSNKEEK (158 aa). 4 positions are modified to phosphoserine: S773, S781, S788, and S800. K803 carries the post-translational modification N6-methyllysine; by SMYD2. At S804 the chain carries Phosphoserine. 4 positions are modified to phosphothreonine: T814, T816, T819, and T834. S848 bears the Phosphoserine mark. The residue at position 853 (K853) is an N6-methyllysine; by SMYD2. The Bipartite nuclear localization signal signature appears at 853–869; the sequence is KRSAEGGNPPKPLKKLR. An N6-acetyllysine; by PCAF mark is found at K866 and K867. The tract at residues 872-921 is disordered; sequence IEGADEADGSKHLPAESKFQQKLAEMTSTRTRMQKQRMNESKDVSNKEEK. The segment covering 908 to 921 has biased composition (basic and acidic residues); that stretch reads RMNESKDVSNKEEK.

The protein belongs to the retinoblastoma protein (RB) family. As to quaternary structure, the hypophosphorylated form interacts with and sequesters the E2F1 transcription factor, thereby inhibiting E2F1 transcription. Interacts with heterodimeric E2F/DP transcription factor complexes containing TFDP1 and either E2F1/E2F, E2F3, E2F4 or E2F5, or TFDP2 and E2F4. Interacts (when hyperphosphorylated and hypophosphorylated) with PKP3; the interaction inhibits RB1 interaction with and repression of the transcription factor E2F1, potentially via sequestering RB1 to the cytoplasm. The unphosphorylated form interacts with EID1, ARID3B, KDM5A, SUV39H1, MJD2A/JHDM3A and THOC1. Interacts with the N-terminal domain of TAF1. Interacts with SNW1, ATAD5, AATF, DNMT1, LIN9, LMNA, KMT5B, KMT5C, PELP1, UHRF2, TMPO-alpha and USP4. Interacts with GRIP1 and UBR4. Interacts with ARID4A and KDM5B. Interacts with E4F1 and LIMD1. Interacts with SMARCA4/BRG1 and HDAC1. Interacts with USP4. Interacts (when methylated at Lys-853) with L3MBTL1. Binds to CDK1 and CDK2. Interacts with CHEK2; phosphorylates RB1. Interacts with PRMT2. Interacts with CEBPA. P-TEFB complex interacts with RB1; promotes phosphorylation of RB1. Interacts with RBBP9; the interaction disrupts RB1 binding to E2F1. Interacts with KAT2B/PCAF and EP300/P300. Interacts with PAX5. Interacts (phosphorylated and unphosphorylated) with BLCAP. May interact with NDC80. In terms of assembly, (Microbial infection) Interacts with adenovirus E1a protein. (Microbial infection) Interacts with SV40 large T antigen. Phosphorylated. Phosphorylated by CDK6 and CDK4, and subsequently by CDK2 at Ser-561 in G1, thereby releasing E2F1 which is then able to activate cell growth. Dephosphorylated at the late M phase. Phosphorylation of threonine residues in domain C promotes interaction between the C-terminal domain C and the Pocket domain, and thereby inhibits interactions with heterodimeric E2F/DP transcription factor complexes. Dephosphorylated at Ser-788 by calcineruin upon calcium stimulation. CDK3/cyclin-C-mediated phosphorylation at Ser-800 and Ser-804 is required for G0-G1 transition. Phosphorylated by CDK1 and CDK2 upon TGFB1-mediated apoptosis. In terms of processing, monomethylation at Lys-803 by SMYD2 enhances phosphorylation at Ser-800 and Ser-804, and promotes cell cycle progression. Monomethylation at Lys-853 by SMYD2 promotes interaction with L3MBTL1. N-terminus is methylated by METTL11A/NTM1. Post-translationally, acetylated in the skin. Acetylation at Lys-866 and Lys-867 regulates subcellular localization during keratinocytes differentiation. In terms of tissue distribution, expressed in the cell nuclei of renal tubules, hepatocytes and skeletal muscles. Expressed in skin (at protein level).

It is found in the nucleus. The protein localises to the cytoplasm. Tumor suppressor that is a key regulator of the G1/S transition of the cell cycle. The hypophosphorylated form binds transcription regulators of the E2F family, preventing transcription of E2F-responsive genes. Both physically blocks E2Fs transactivating domain and recruits chromatin-modifying enzymes that actively repress transcription. Cyclin and CDK-dependent phosphorylation of RB1 induces its dissociation from E2Fs, thereby activating transcription of E2F responsive genes and triggering entry into S phase. RB1 also promotes the G0-G1 transition upon phosphorylation and activation by CDK3/cyclin-C. Directly involved in heterochromatin formation by maintaining overall chromatin structure and, in particular, that of constitutive heterochromatin by stabilizing histone methylation. Recruits and targets histone methyltransferases SUV39H1, KMT5B and KMT5C, leading to epigenetic transcriptional repression. Controls histone H4 'Lys-20' trimethylation. Inhibits the intrinsic kinase activity of TAF1. Mediates transcriptional repression by SMARCA4/BRG1 by recruiting a histone deacetylase (HDAC) complex to the c-FOS promoter. In resting neurons, transcription of the c-FOS promoter is inhibited by BRG1-dependent recruitment of a phospho-RB1-HDAC1 repressor complex. Upon calcium influx, RB1 is dephosphorylated by calcineurin, which leads to release of the repressor complex. The protein is Retinoblastoma-associated protein (Rb1) of Mus musculus (Mouse).